The primary structure comprises 234 residues: MTKIAMANFKSAMPIFKSHAYLKELEKTLKPQHFDRVFVFPDFFGLLPNSFLHFTLGVQNAYPRDCGAFTGEITSKHLEELKIHTLLIGHSERRTLLKESPSFLKEKFDFFKSKNFKIVYCIGEELTTREKGFKAVKEFLSEQLENIDLNYPNLVVAYEPIWAIGTKKSASLEDIYLTHGFLKQILNQKTPLLYGGSVNTQNAKEILGIDSVDGLLIGSASWELENFKTIISFL.

8–10 (NFK) lines the substrate pocket. The Electrophile role is filled by H90. Catalysis depends on E159, which acts as the Proton acceptor. Substrate-binding positions include G165, S197, and 218–219 (GS).

Homodimer.

The protein localises to the cytoplasm. It catalyses the reaction D-glyceraldehyde 3-phosphate = dihydroxyacetone phosphate. Its pathway is carbohydrate biosynthesis; gluconeogenesis. It functions in the pathway carbohydrate degradation; glycolysis; D-glyceraldehyde 3-phosphate from glycerone phosphate: step 1/1. In terms of biological role, involved in the gluconeogenesis. Catalyzes stereospecifically the conversion of dihydroxyacetone phosphate (DHAP) to D-glyceraldehyde-3-phosphate (G3P). The chain is Triosephosphate isomerase from Helicobacter pylori (strain ATCC 700392 / 26695) (Campylobacter pylori).